The chain runs to 113 residues: MICLKILRFYQKFLSPLKPAACRYYPSCSEYALWQFQKKNFFLAFFSTFFRILRCNPFFKGGFDYPRVSKNFYPINLCFKPIFLAEKQLCFLYIPYKNKSFYLIKIIFKRTNQ.

This sequence belongs to the UPF0161 family.

The protein resides in the cell inner membrane. Its function is as follows. Could be involved in insertion of integral membrane proteins into the membrane. The sequence is that of Putative membrane protein insertion efficiency factor from Campylobacter jejuni subsp. jejuni serotype O:2 (strain ATCC 700819 / NCTC 11168).